Here is a 430-residue protein sequence, read N- to C-terminus: Adenylosuccinate synthetase (430 aa).

Residues 12 to 18 (GDEGKGK) and 40 to 42 (GHT) contribute to the GTP site. D13 functions as the Proton acceptor in the catalytic mechanism. Mg(2+) contacts are provided by D13 and G40. Residues 13–16 (DEGK), 38–41 (NAGH), T128, R142, Q223, T238, and R302 contribute to the IMP site. The Proton donor role is filled by H41. Residue 298–304 (TTTGRPR) participates in substrate binding. GTP is bound by residues R304, 330–332 (SID), and 412–414 (SVG).

The protein belongs to the adenylosuccinate synthetase family. Homodimer. Mg(2+) is required as a cofactor.

Its subcellular location is the cytoplasm. The catalysed reaction is IMP + L-aspartate + GTP = N(6)-(1,2-dicarboxyethyl)-AMP + GDP + phosphate + 2 H(+). It participates in purine metabolism; AMP biosynthesis via de novo pathway; AMP from IMP: step 1/2. Functionally, plays an important role in the de novo pathway of purine nucleotide biosynthesis. Catalyzes the first committed step in the biosynthesis of AMP from IMP. This Streptococcus pyogenes serotype M5 (strain Manfredo) protein is Adenylosuccinate synthetase.